Reading from the N-terminus, the 1342-residue chain is MVYSYTEKKRIRKDFGKRPQVLDVPYLLSIQLDSFQKFIEQDPEGQYGLEAAFRSVFPIQSYSGNSELQYVSYRLGEPVFDVKECQIRGVTYSAPLRVKLRLVIYEREAPEGTVKDIKEQEVYMGEIPLMTDNGTFVINGTERVIVSQLHRSPGVFFDSDKGKTHSSGKVLYNARIIPYRGSWLDFEFDPKDNLFVRIDRRRKLPATIILRALDYTTEQILDLFFEKVVFEIRDNKLQMELIPERLRGETASFDIEANGKIYVEKGRRITARHIRQLEKDEIKHIEVPVEYIAGKVAAKDYVDASTGELICPANMELSLDLLAKLSQSGHKRIETLFTNDLDHGPYISETVRVDPTTDRLSALVEIYRMMRPGEPPTREAAESLFENLFFSEDRYDLSAVGRMKFNRSLLRDEIEGSGILSKADIIDVMKKLIDIRNGKGEVDDIDHLGNRRIRSVGEMAENQFRVGLVRVERAVKERLSLGDLDTLMPQDMINAKPISAAVKEFFGSSQLSQFMDQNNPLSEITHKRRISALGPGGLTRERAGFEVRDVHPTHYGRVCPIETPEGPNIGLINSLSVYAQTNEYGFLETPYRKVTDGVVTDEIHYLSAIEEGNYVIAQANTNLTEEGRFADDLVTCRSKGESSLFSADQVDYMDVSTQQVVSVGASLIPFLEHDDANRALMGANMQRQAVPTLRADKPLVGTGMERAVAVDSGVTAVAKRGGIVQYVDASRIVIKVNEDEMYPGEAGIDIYNLTKYTRSNQNTCINQMPCVSLNEPVERGDVLADGPSTDLGELALGQNMRVAFMPWNGYNFEDSILVSERVVQEDRFTTIHIQELACVSRDTKLGPEEITADIPNVGEAALSKLDESGIVYIGAEVTGGDILVGKVTPKGETQLTPEEKLLRAIFGEKASDVKDSSLRVPNGVSGTVIDVQVFTRDGVEKDKRALEIEEMQLKQAKKDLSEELQILEAGLFSRIRAVLIAGGVEAEKLDKLPRDRWLELGLTDEEKQNQLEQLAEQYDELKHEFEKKLEAKRRKITQGDDLAPGVLKIVKVYLAVKRQIQPGDKMAGRHGNKGVISKINPIEDMPYDENGTPVDIVLNPLGVPSRMNIGQILETHLGMAAKGIGDKINAMLKRQEEVAKLREFIQKAYDLGQDVRQKVDLNTFSDDEVLRLAENLRKGMPLATPVFDGAKEAEIKELLQLGDLPTSGQITLFDGRTGEQFERPVTVGYMYMLKLNHLVDDKMHARSTGSYSLVTQQPLGGKAQFGGQRFGEMEVWALEAYGAAYTLQEMLTVKSDDVNGRTKMYKNIVDGNHQMEPGMPESFNVLLKEIRSLGINIELEDE.

It belongs to the RNA polymerase beta chain family. The RNAP catalytic core consists of 2 alpha, 1 beta, 1 beta' and 1 omega subunit. When a sigma factor is associated with the core the holoenzyme is formed, which can initiate transcription.

It catalyses the reaction RNA(n) + a ribonucleoside 5'-triphosphate = RNA(n+1) + diphosphate. DNA-dependent RNA polymerase catalyzes the transcription of DNA into RNA using the four ribonucleoside triphosphates as substrates. The polypeptide is DNA-directed RNA polymerase subunit beta (Cronobacter sakazakii (strain ATCC BAA-894) (Enterobacter sakazakii)).